A 241-amino-acid polypeptide reads, in one-letter code: Phycocyanobilin:ferredoxin oxidoreductase (241 aa).

This sequence belongs to the HY2 family.

It catalyses the reaction (2R,3Z)-phycocyanobilin + 4 oxidized [2Fe-2S]-[ferredoxin] = biliverdin IXalpha + 4 reduced [2Fe-2S]-[ferredoxin] + 4 H(+). Functionally, catalyzes the four-electron reduction of biliverdin IX-alpha (2-electron reduction at both the A and D rings); the reaction proceeds via an isolatable 2-electron intermediate, 181,182-dihydrobiliverdin. In Prochlorococcus marinus (strain MIT 9301), this protein is Phycocyanobilin:ferredoxin oxidoreductase.